The sequence spans 106 residues: Ferredoxin (106 aa).

2 residues coordinate [3Fe-4S] cluster: Cys9 and Cys17. [4Fe-4S] cluster is bound by residues Cys21, Cys40, Cys43, and Cys46. One can recognise a 4Fe-4S ferredoxin-type domain in the interval 31–60 (RMLYIHPDECVDCGACEPVCPVEAIYYEDD). Cys50 lines the [3Fe-4S] cluster pocket. Residues 84–106 (GAAKVGKVDRDVEPVSSLPPQGE) are disordered.

It depends on [4Fe-4S] cluster as a cofactor. [3Fe-4S] cluster is required as a cofactor.

In terms of biological role, ferredoxins are iron-sulfur proteins that transfer electrons in a wide variety of metabolic reactions. This Saccharopolyspora erythraea (Streptomyces erythraeus) protein is Ferredoxin (fdxA).